Reading from the N-terminus, the 242-residue chain is UDP-2,3-diacylglucosamine hydrolase (242 aa).

Residues Asp-8, His-10, Asp-41, Asn-79, and His-114 each coordinate Mn(2+). Substrate is bound at residue 79–80 (NR). Residues Asp-122, Lys-164, Lys-167, and His-195 each coordinate substrate. Positions 195 and 197 each coordinate Mn(2+).

This sequence belongs to the LpxH family. Mn(2+) serves as cofactor.

It is found in the cell inner membrane. The enzyme catalyses UDP-2-N,3-O-bis[(3R)-3-hydroxytetradecanoyl]-alpha-D-glucosamine + H2O = 2-N,3-O-bis[(3R)-3-hydroxytetradecanoyl]-alpha-D-glucosaminyl 1-phosphate + UMP + 2 H(+). The protein operates within glycolipid biosynthesis; lipid IV(A) biosynthesis; lipid IV(A) from (3R)-3-hydroxytetradecanoyl-[acyl-carrier-protein] and UDP-N-acetyl-alpha-D-glucosamine: step 4/6. In terms of biological role, hydrolyzes the pyrophosphate bond of UDP-2,3-diacylglucosamine to yield 2,3-diacylglucosamine 1-phosphate (lipid X) and UMP by catalyzing the attack of water at the alpha-P atom. Involved in the biosynthesis of lipid A, a phosphorylated glycolipid that anchors the lipopolysaccharide to the outer membrane of the cell. The chain is UDP-2,3-diacylglucosamine hydrolase from Vibrio parahaemolyticus serotype O3:K6 (strain RIMD 2210633).